A 304-amino-acid chain; its full sequence is UDP-3-O-acyl-N-acetylglucosamine deacetylase (304 aa).

Residues histidine 78, histidine 237, and aspartate 241 each contribute to the Zn(2+) site. Histidine 264 serves as the catalytic Proton donor.

This sequence belongs to the LpxC family. Requires Zn(2+) as cofactor.

It carries out the reaction a UDP-3-O-[(3R)-3-hydroxyacyl]-N-acetyl-alpha-D-glucosamine + H2O = a UDP-3-O-[(3R)-3-hydroxyacyl]-alpha-D-glucosamine + acetate. The protein operates within glycolipid biosynthesis; lipid IV(A) biosynthesis; lipid IV(A) from (3R)-3-hydroxytetradecanoyl-[acyl-carrier-protein] and UDP-N-acetyl-alpha-D-glucosamine: step 2/6. In terms of biological role, catalyzes the hydrolysis of UDP-3-O-myristoyl-N-acetylglucosamine to form UDP-3-O-myristoylglucosamine and acetate, the committed step in lipid A biosynthesis. This chain is UDP-3-O-acyl-N-acetylglucosamine deacetylase, found in Thioalkalivibrio sulfidiphilus (strain HL-EbGR7).